We begin with the raw amino-acid sequence, 21 residues long: Alpha-fibrinogenase A1 (21 aa).

It belongs to the peptidase S1 family. Snake venom subfamily. Monomer. As to expression, expressed by the venom gland.

Its subcellular location is the secreted. Inhibited by PMSF, bovine aprotinin (APR), and soybean trypsin inhibitor (STI). Is not inhibited by EDTA, beta-mercaptoethanol, and high temperature (85 degrees Celsius). Functionally, snake venom serine protease that completely cleaves fibrinogen Aalpha chain (FGA), partially cleaves Bbeta chain (FGB) and has no activity on gamma chain. Is more potent that A2 and A3 alpha-fibrinogenases. Very active within 5 minutes. The polypeptide is Alpha-fibrinogenase A1 (Crotalus atrox (Western diamondback rattlesnake)).